The following is a 300-amino-acid chain: Homoserine kinase (300 aa).

ATP is bound at residue 86–96; that stretch reads PVARGLGSSAT.

The protein belongs to the GHMP kinase family. Homoserine kinase subfamily.

The protein localises to the cytoplasm. It carries out the reaction L-homoserine + ATP = O-phospho-L-homoserine + ADP + H(+). It functions in the pathway amino-acid biosynthesis; L-threonine biosynthesis; L-threonine from L-aspartate: step 4/5. Catalyzes the ATP-dependent phosphorylation of L-homoserine to L-homoserine phosphate. The sequence is that of Homoserine kinase from Persephonella marina (strain DSM 14350 / EX-H1).